The following is an 877-amino-acid chain: Dynamin (877 aa).

One can recognise a Dynamin-type G domain in the interval 23 to 289; sequence QLDLPQIAVV…LTNHIRDTLP (267 aa). Residues 33–40 are G1 motif; it reads GGQSAGKS. 33–41 is a binding site for GTP; the sequence is GGQSAGKSS. A G2 motif region spans residues 59-61; the sequence is VTR. Residues 131-134 are G3 motif; that stretch reads DLPG. The interval 200 to 203 is G4 motif; sequence TKLD. Residues 200 to 206 and 231 to 234 each bind GTP; these read TKLDLMD and NRSQ. Positions 230–233 are G5 motif; that stretch reads VNRS. The 109-residue stretch at 513–621 folds into the PH domain; the sequence is QVIRKGHMVI…WKASFLRAGV (109 aa). Disordered regions lie at residues 623–648 and 740–834; these read PEKQETQENGDESASEESSSDPQLER and TVSS…SGAV. Residues 630–641 show a composition bias toward acidic residues; sequence ENGDESASEESS. Positions 650-741 constitute a GED domain; it reads VETIRNLVDS…IIGDVSMATV (92 aa). Phosphoserine occurs at positions 756, 764, and 767. The segment covering 788-826 has biased composition (pro residues); sequence PPLPPSTGRPAPAIPNRPGGGAPPLPGGRPGGSLPPPML.

This sequence belongs to the TRAFAC class dynamin-like GTPase superfamily. Dynamin/Fzo/YdjA family.

It localises to the cytoplasm. It is found in the cytoskeleton. The catalysed reaction is GTP + H2O = GDP + phosphate + H(+). Functionally, microtubule-associated force-producing protein which is involved in the production of microtubule bundles and which is able to bind and hydrolyze GTP. Implicated in endocytic protein sorting. The protein is Dynamin (shi) of Drosophila melanogaster (Fruit fly).